We begin with the raw amino-acid sequence, 450 residues long: Phosphoglucosamine mutase 2 (450 aa).

The active-site Phosphoserine intermediate is the serine 101. Residues serine 101, aspartate 245, aspartate 247, and aspartate 249 each coordinate Mg(2+). Serine 101 bears the Phosphoserine mark.

The protein belongs to the phosphohexose mutase family. Mg(2+) serves as cofactor. Post-translationally, activated by phosphorylation.

It catalyses the reaction alpha-D-glucosamine 1-phosphate = D-glucosamine 6-phosphate. Its function is as follows. Catalyzes the conversion of glucosamine-6-phosphate to glucosamine-1-phosphate. The polypeptide is Phosphoglucosamine mutase 2 (Shewanella sp. (strain MR-7)).